Consider the following 217-residue polypeptide: Large ribosomal subunit protein bL25 (217 aa).

Belongs to the bacterial ribosomal protein bL25 family. CTC subfamily. As to quaternary structure, part of the 50S ribosomal subunit; part of the 5S rRNA/L5/L18/L25 subcomplex. Contacts the 5S rRNA. Binds to the 5S rRNA independently of L5 and L18.

This is one of the proteins that binds to the 5S RNA in the ribosome where it forms part of the central protuberance. This is Large ribosomal subunit protein bL25 from Methylobacterium sp. (strain 4-46).